Reading from the N-terminus, the 366-residue chain is Spermidine/putrescine import ATP-binding protein PotA (366 aa).

Residues 8–239 (IRFENVTKQF…PINKFVADFI (232 aa)) form the ABC transporter domain. 41 to 48 (GPSGCGKT) serves as a coordination point for ATP.

This sequence belongs to the ABC transporter superfamily. Spermidine/putrescine importer (TC 3.A.1.11.1) family. In terms of assembly, the complex is composed of two ATP-binding proteins (PotA), two transmembrane proteins (PotB and PotC) and a solute-binding protein (PotD).

The protein resides in the cell membrane. It catalyses the reaction ATP + H2O + polyamine-[polyamine-binding protein]Side 1 = ADP + phosphate + polyamineSide 2 + [polyamine-binding protein]Side 1.. Part of the ABC transporter complex PotABCD involved in spermidine/putrescine import. Responsible for energy coupling to the transport system. This chain is Spermidine/putrescine import ATP-binding protein PotA, found in Listeria innocua serovar 6a (strain ATCC BAA-680 / CLIP 11262).